We begin with the raw amino-acid sequence, 142 residues long: DNA-directed RNA polymerase subunit omega (142 aa).

The segment at 104-142 is disordered; sequence FNTDADVDQESTDIQDDEVENEMSNQDSEDIDDEVDNEE. Positions 108-142 are enriched in acidic residues; the sequence is ADVDQESTDIQDDEVENEMSNQDSEDIDDEVDNEE.

This sequence belongs to the RNA polymerase subunit omega family. The RNAP catalytic core consists of 2 alpha, 1 beta, 1 beta' and 1 omega subunit. When a sigma factor is associated with the core the holoenzyme is formed, which can initiate transcription.

The enzyme catalyses RNA(n) + a ribonucleoside 5'-triphosphate = RNA(n+1) + diphosphate. In terms of biological role, promotes RNA polymerase assembly. Latches the N- and C-terminal regions of the beta' subunit thereby facilitating its interaction with the beta and alpha subunits. The protein is DNA-directed RNA polymerase subunit omega of Wolbachia sp. subsp. Brugia malayi (strain TRS).